A 338-amino-acid polypeptide reads, in one-letter code: Protein FosB (338 aa).

Disordered stretches follow at residues 1–54 (MFQA…PGSF), 79–191 (MAQS…DQLE), 222–276 (CKIP…PPNL), and 316–338 (GAQR…LLAL). Composition is skewed to polar residues over residues 13 to 31 (SRCS…SVDS) and 79 to 88 (MAQSQGQPLA). Phosphoserine is present on Ser27. The segment covering 113–124 (SSGGASGSGGPS) has biased composition (gly residues). Over residues 125 to 137 (TSGTTSGPGPARP) the composition is skewed to low complexity. The bZIP domain maps to 155–218 (EEKRRVRRER…ERLEFVLVAH (64 aa)). Residues 157–182 (KRRVRRERNKLAAAKCRNRRRELTDR) are basic motif. Positions 183–211 (LQAETDQLEEEKAELESEIAELQKEKERL) are leucine-zipper. Residues 256–265 (LPPPPPPPLP) show a composition bias toward pro residues. Polar residues-rich tracts occupy residues 266-276 (FQTSQDAPPNL) and 318-338 (QRTS…LLAL).

It belongs to the bZIP family. Fos subfamily. In terms of assembly, heterodimer; binds to DNA as heterodimer. Component of an AP-1 transcription factor complex; composed of FOS-JUN heterodimers. As part of the AP-1 transcription factor complex, forms heterodimers with JUN, JUNB or JUND, thereby binding to the AP-1 consensus sequence and stimulating transcription. Interacts with the BAF multiprotein chromatin-remodeling complex subunits SMARCB1 and SMARCD1. Interacts with ARID1A and JUN. As to quaternary structure, homodimer under oxidizing conditions and monomer under reducing conditions (in vitro). Heterodimer; binds to DNA as heterodimer. Forms heterodimers with JUNB, JUN or JUND; thereby binding to the AP-1 consensus sequence but does not stimulate transcription. Forms heterodimers with JUND under oxidizing conditions. Post-translationally, phosphorylated. Phosphorylated at Ser-27 by CSNK2A1; phosphorylation increases protein stability and transactivation potential. Expressed in the nucleus accumbens of the striatum (at protein level).

It localises to the nucleus. Functionally, heterodimerizes with proteins of the JUN family to form an AP-1 transcription factor complex, thereby enhancing their DNA binding activity to gene promoters containing an AP-1 consensus sequence 5'-TGA[GC]TCA-3' and enhancing their transcriptional activity. As part of the AP-1 complex, facilitates enhancer selection together with cell-type-specific transcription factors by collaboratively binding to nucleosomal enhancers and recruiting the SWI/SNF (BAF) chromatin remodeling complex to establish accessible chromatin. Together with JUN, plays a role in activation-induced cell death of T cells by binding to the AP-1 promoter site of FASLG/CD95L, and inducing its transcription in response to activation of the TCR/CD3 signaling pathway. Exhibits transactivation activity in vitro. Involved in the display of nurturing behavior towards newborns. May play a role in neurogenesis in the hippocampus and in learning and memory-related tasks by regulating the expression of various genes involved in neurogenesis, depression and epilepsy. Implicated in behavioral responses related to morphine reward and spatial memory. In terms of biological role, exhibits lower transactivation activity than isoform 1 in vitro. The heterodimer with JUN does not display any transcriptional activity, and may thereby act as an transcriptional inhibitor. May be involved in the regulation of neurogenesis in the hippocampus. May play a role in synaptic modifications in nucleus accumbens medium spiny neurons and thereby play a role in adaptive and pathological reward-dependent learning, including maladaptive responses involved in drug addiction. Seems to be more stably expressed with a half-life of ~9.5 hours in cell culture as compared to 1.5 hours half-life of isoform 1. The chain is Protein FosB (FOSB) from Homo sapiens (Human).